Reading from the N-terminus, the 23-residue chain is Alyteserin-1a (23 aa).

An Asparagine amide modification is found at N23.

In terms of tissue distribution, expressed by the skin glands.

It localises to the secreted. The protein localises to the target cell membrane. Antibacterial peptide with amphipathic alpha-helical structure. Shows selective growth inhibitory activity against the Gram-negative bacteria E.coli (MIC=25 uM) Has a weak hemolytic activity against human erythrocytes (LC(50)&gt;100 uM). Is very weakly active against S.aureus (MIC=200 uM). The protein is Alyteserin-1a of Alytes obstetricans (Common midwife toad).